The primary structure comprises 310 residues: Olfactory receptor 1496 (310 aa).

Over 1–23 (MNNQTFITQFLLLGLPIPEEHQH) the chain is Extracellular. Asparagine 3 carries an N-linked (GlcNAc...) asparagine glycan. The helical transmembrane segment at 24-48 (LFYALFLVMYLTTILGNLLIIVLVQ) threads the bilayer. Residues 49–55 (LDSQLHT) are Cytoplasmic-facing. Residues 56–77 (PMYLFLSNLSFSDLCFSSVTMP) traverse the membrane as a helical segment. The Extracellular portion of the chain corresponds to 78–98 (KLLQNMRSQDTSIPYGGCLAQ). The cysteines at positions 95 and 187 are disulfide-linked. Residues 99 to 118 (TYFFMVFGDMESFLLVAMAY) traverse the membrane as a helical segment. Over 119 to 137 (DRYVAICFPLHYTSIMSPK) the chain is Cytoplasmic. The chain crosses the membrane as a helical span at residues 138–156 (LCTCLVLLLWMLTTSHAMM). The Extracellular segment spans residues 157–194 (HTLLAARLSFCENNVVLNFFCDLFVLLKLACSDTYINE). The helical transmembrane segment at 195–217 (LMIFIMSTLLIIIPFFLIVMSYA) threads the bilayer. At 218 to 234 (RIISSILKVPSTQGICK) the chain is on the cytoplasmic side. The helical transmembrane segment at 235–258 (VFSTCGSHLSVVSLFYGTIIGLYL) threads the bilayer. The Extracellular portion of the chain corresponds to 259–270 (CPAGNNSTVKEM). Residues 271-290 (VMAMMYTVVTPMLNPFIYSL) form a helical membrane-spanning segment. Residues 291–310 (RNRDMKRALIRVICSMKITL) are Cytoplasmic-facing.

This sequence belongs to the G-protein coupled receptor 1 family. In terms of tissue distribution, olfactory epithelium.

It is found in the cell membrane. Its function is as follows. Odorant receptor. The sequence is that of Olfactory receptor 1496 (Olr1496) from Rattus norvegicus (Rat).